The sequence spans 933 residues: Exosome complex exonuclease RRP44 homolog A (933 aa).

One can recognise a PINc domain in the interval 50–163 (KIIVVDTNVV…LVTNDRENKR (114 aa)). Residues 217–321 (QEHKPMSEIT…NVDDAPRTSN (105 aa)) form the CSD1 domain. Residues 296-336 (AEEDDEEDDTVHLAPDNVDDAPRTSNLSHETSGDKNAAPVR) form a disordered region. The CSD2 domain maps to 371-438 (ALFVSKDRRI…ETEVVLIEND (68 aa)). An RNB domain is found at 469-798 (RQDLRHLLVF…FVHRLLAASL (330 aa)). Residues D481 and D490 each coordinate Mg(2+).

It belongs to the RNR ribonuclease family. As to quaternary structure, probable component of the RNA exosome complex. Requires Mg(2+) as cofactor.

The protein resides in the nucleus. Its function is as follows. Catalytic component of the RNA exosome complex which has 3'-&gt;5' exoribonuclease activity and participates in a multitude of cellular RNA processing and degradation events. Required for 5.8S rRNA intermediate processing and the degradation of 5' external transcribed spacer (5' ETS), a maturation by-product of rRNA synthesis. Is not involved in the degradation of turnip crinkle virus (TCV) RNA and significant virus resistance. Required for normal development of female gametophytes and early embryogenesis. This Arabidopsis thaliana (Mouse-ear cress) protein is Exosome complex exonuclease RRP44 homolog A.